We begin with the raw amino-acid sequence, 447 residues long: Serine--tRNA ligase (447 aa).

245–247 (TAE) contributes to the L-serine binding site. ATP contacts are provided by residues 276-278 (RKE) and Val292. Glu299 contributes to the L-serine binding site. An ATP-binding site is contributed by 363 to 366 (ELAS). Thr398 contributes to the L-serine binding site.

It belongs to the class-II aminoacyl-tRNA synthetase family. Type-1 seryl-tRNA synthetase subfamily. As to quaternary structure, homodimer. The tRNA molecule binds across the dimer.

It localises to the cytoplasm. The catalysed reaction is tRNA(Ser) + L-serine + ATP = L-seryl-tRNA(Ser) + AMP + diphosphate + H(+). The enzyme catalyses tRNA(Sec) + L-serine + ATP = L-seryl-tRNA(Sec) + AMP + diphosphate + H(+). It participates in aminoacyl-tRNA biosynthesis; selenocysteinyl-tRNA(Sec) biosynthesis; L-seryl-tRNA(Sec) from L-serine and tRNA(Sec): step 1/1. Functionally, catalyzes the attachment of serine to tRNA(Ser). Is also able to aminoacylate tRNA(Sec) with serine, to form the misacylated tRNA L-seryl-tRNA(Sec), which will be further converted into selenocysteinyl-tRNA(Sec). In Pyrobaculum neutrophilum (strain DSM 2338 / JCM 9278 / NBRC 100436 / V24Sta) (Thermoproteus neutrophilus), this protein is Serine--tRNA ligase.